Here is a 171-residue protein sequence, read N- to C-terminus: Adenine phosphoribosyltransferase (171 aa).

Belongs to the purine/pyrimidine phosphoribosyltransferase family. As to quaternary structure, homodimer.

It localises to the cytoplasm. It carries out the reaction AMP + diphosphate = 5-phospho-alpha-D-ribose 1-diphosphate + adenine. It functions in the pathway purine metabolism; AMP biosynthesis via salvage pathway; AMP from adenine: step 1/1. Its function is as follows. Catalyzes a salvage reaction resulting in the formation of AMP, that is energically less costly than de novo synthesis. This Solidesulfovibrio magneticus (strain ATCC 700980 / DSM 13731 / RS-1) (Desulfovibrio magneticus) protein is Adenine phosphoribosyltransferase.